A 286-amino-acid polypeptide reads, in one-letter code: Tryptophan 2,3-dioxygenase (286 aa).

Substrate-binding positions include 55-59 (FIIIH), Tyr117, and Arg121. Residue His244 participates in heme binding. Thr258 contacts substrate.

The protein belongs to the tryptophan 2,3-dioxygenase family. In terms of assembly, homotetramer. Requires heme as cofactor.

The catalysed reaction is L-tryptophan + O2 = N-formyl-L-kynurenine. Its pathway is amino-acid degradation; L-tryptophan degradation via kynurenine pathway; L-kynurenine from L-tryptophan: step 1/2. Heme-dependent dioxygenase that catalyzes the oxidative cleavage of the L-tryptophan (L-Trp) pyrrole ring and converts L-tryptophan to N-formyl-L-kynurenine. Catalyzes the oxidative cleavage of the indole moiety. This is Tryptophan 2,3-dioxygenase from Shewanella woodyi (strain ATCC 51908 / MS32).